The following is a 146-amino-acid chain: Hemoglobin subunit beta-0 (146 aa).

The Globin domain occupies 2–146 (EWTDFERATI…VVSSLGRQYH (145 aa)). Positions 63 and 92 each coordinate heme b.

Belongs to the globin family. Heterotetramer of two alpha chains and two beta chains. Red blood cells.

Its function is as follows. Involved in oxygen transport from gills to the various peripheral tissues. The protein is Hemoglobin subunit beta-0 (hbb0) of Pagothenia borchgrevinki (Bald rockcod).